The primary structure comprises 123 residues: Small ribosomal subunit protein uS12 (123 aa).

Asp89 is subject to 3-methylthioaspartic acid. Residues 104-123 (TAGVKDRKQARSKYGAKRPK) are disordered. A compositionally biased stretch (basic residues) spans 113-123 (ARSKYGAKRPK).

The protein belongs to the universal ribosomal protein uS12 family. In terms of assembly, part of the 30S ribosomal subunit. Contacts proteins S8 and S17. May interact with IF1 in the 30S initiation complex.

Functionally, with S4 and S5 plays an important role in translational accuracy. In terms of biological role, interacts with and stabilizes bases of the 16S rRNA that are involved in tRNA selection in the A site and with the mRNA backbone. Located at the interface of the 30S and 50S subunits, it traverses the body of the 30S subunit contacting proteins on the other side and probably holding the rRNA structure together. The combined cluster of proteins S8, S12 and S17 appears to hold together the shoulder and platform of the 30S subunit. This Neisseria meningitidis serogroup C (strain 053442) protein is Small ribosomal subunit protein uS12.